We begin with the raw amino-acid sequence, 508 residues long: Steroid 17-alpha-hydroxylase/17,20 lyase (508 aa).

Substrate is bound at residue Asn202. Cys442 is a binding site for heme.

It belongs to the cytochrome P450 family. The cofactor is heme.

It localises to the endoplasmic reticulum membrane. The protein resides in the microsome membrane. It catalyses the reaction a C21-steroid + reduced [NADPH--hemoprotein reductase] + O2 = a 17alpha-hydroxy-C21-steroid + oxidized [NADPH--hemoprotein reductase] + H2O + H(+). The enzyme catalyses progesterone + reduced [NADPH--hemoprotein reductase] + O2 = 17alpha-hydroxyprogesterone + oxidized [NADPH--hemoprotein reductase] + H2O + H(+). It carries out the reaction pregnenolone + reduced [NADPH--hemoprotein reductase] + O2 = 17alpha-hydroxypregnenolone + oxidized [NADPH--hemoprotein reductase] + H2O + H(+). The catalysed reaction is 17alpha-hydroxyprogesterone + reduced [NADPH--hemoprotein reductase] + O2 = androst-4-ene-3,17-dione + acetate + oxidized [NADPH--hemoprotein reductase] + H2O + 2 H(+). It catalyses the reaction 17alpha-hydroxyprogesterone + reduced [NADPH--hemoprotein reductase] + O2 = 16alpha,17alpha-dihydroxyprogesterone + oxidized [NADPH--hemoprotein reductase] + H2O + H(+). The enzyme catalyses 16alpha,17alpha-dihydroxyprogesterone + reduced [NADPH--hemoprotein reductase] + O2 = 6beta,16alpha,17alpha-trihydroxyprogesterone + oxidized [NADPH--hemoprotein reductase] + H2O + H(+). It carries out the reaction 17alpha-hydroxypregnenolone + reduced [NADPH--hemoprotein reductase] + O2 = 3beta-hydroxyandrost-5-en-17-one + acetate + oxidized [NADPH--hemoprotein reductase] + H2O + 2 H(+). The catalysed reaction is 16alpha,17alpha-dihydroxypregnenolone + reduced [NADPH--hemoprotein reductase] + O2 = 3beta,16alpha-dihydroxy-androst-5-en-17-one + acetate + oxidized [NADPH--hemoprotein reductase] + H2O + 2 H(+). It catalyses the reaction 3beta-hydroxyandrost-5-en-17-one + reduced [NADPH--hemoprotein reductase] + O2 = 3beta,16alpha-dihydroxy-androst-5-en-17-one + oxidized [NADPH--hemoprotein reductase] + H2O + H(+). The enzyme catalyses androst-4-ene-3,17-dione + reduced [NADPH--hemoprotein reductase] + O2 = 16alpha-hydroxyandrost-4-ene-3,17-dione + oxidized [NADPH--hemoprotein reductase] + H2O + H(+). Its pathway is steroid hormone biosynthesis. It participates in steroid biosynthesis; glucocorticoid biosynthesis. With respect to regulation, regulated predominantly by intracellular cAMP levels. The 17,20-lyase activity is stimulated by cytochrome b5, which acts as an allosteric effector increasing the Vmax of the lyase activity. A cytochrome P450 monooxygenase involved in corticoid and androgen biosynthesis. Catalyzes 17-alpha hydroxylation of C21 steroids, which is common for both pathways. A second oxidative step, required only for androgen synthesis, involves an acyl-carbon cleavage. The 17-alpha hydroxy intermediates, as part of adrenal glucocorticoids biosynthesis pathway, are precursors of cortisol. Hydroxylates steroid hormones, pregnenolone and progesterone to form 17-alpha hydroxy metabolites, followed by the cleavage of the C17-C20 bond to form C19 steroids, dehydroepiandrosterone (DHEA) and androstenedione. Has 16-alpha hydroxylase activity. Catalyzes 16-alpha hydroxylation of 17-alpha hydroxy pregnenolone, followed by the cleavage of the C17-C20 bond to form 16-alpha-hydroxy DHEA. Also 16-alpha hydroxylates androgens, relevant for estriol synthesis. Mechanistically, uses molecular oxygen inserting one oxygen atom into a substrate, and reducing the second into a water molecule, with two electrons provided by NADPH via cytochrome P450 reductase (CPR; NADPH-ferrihemoprotein reductase). In Papio cynocephalus (Yellow baboon), this protein is Steroid 17-alpha-hydroxylase/17,20 lyase (CYP17A1).